A 524-amino-acid polypeptide reads, in one-letter code: METIGRGTWIDKLAHELVEREEALGRDTEMINVESGLGASGIPHMGSLGDAVRAYGVGLAVGDMGHSFRLIAYFDDLDGLRKVPEGMPSSLEEHIARPVSAIPDPYGCHDSYGMHMSGLLLEGLDALGIEYDFRRARDTYRDGLLAEQIHRILSNSSVIGEKIAEMVGQEKFRSSLPYFAVCEQCGKMYTAESVEYLADSRKVRYRCGDAEVGGRKIAGCGHEGEADTGGAGGKLAWKVEFAARWQAFDVRFEAYGKDIMDSVRINDWVSDEILSSPHPHHTRYEMFLDKGGKKISKSSGNVVTPQKWLRYGTPQSILLLMYKRITGARELGLEDVPSLMDEYGDLQREYFAGGGRGGKAREAKNRGLFEYTNLLEAQEGPRPHAGYRLLVELSRLFRENRTERVTKKLVEYGVIDGPSPGIERLIALAGNYADDMYSAERTEVELDGATRGALSELAEMLGSAPEGGLQDVIYGVAKSHGVPPRDFFKALYRIILDASSGPRIGPFIEDIGREKVAGMIRGRL.

Positions 39-47 match the 'HIGH' region motif; it reads ASGIPHMGS. Residues 294 to 298 carry the 'KMSKS' region motif; the sequence is KISKS. Residue K297 participates in ATP binding.

The protein belongs to the class-I aminoacyl-tRNA synthetase family.

The protein resides in the cytoplasm. The catalysed reaction is tRNA(Lys) + L-lysine + ATP = L-lysyl-tRNA(Lys) + AMP + diphosphate. The polypeptide is Lysine--tRNA ligase (lysS) (Cenarchaeum symbiosum).